Here is a 4235-residue protein sequence, read N- to C-terminus: Tenellin synthetase (4235 aa).

The region spanning 15–455 (SEPIAIVGSA…GTNAHAIIER (441 aa)) is the Ketosynthase family 3 (KS3) domain. Catalysis depends on for beta-ketoacyl synthase activity residues cysteine 189, histidine 326, and histidine 375. A malonyl-CoA:ACP transacylase (MAT) domain region spans residues 590-924 (IFTGQGAQWP…ANDAVAFSTA (335 aa)). Residues 993–1135 (HELLGRRMPD…GRIAVHLGAK (143 aa)) are N-terminal hotdog fold. The segment at 993–1310 (HELLGRRMPD…GFEVRAVGEP (318 aa)) is dehydratase (DH) domain. Positions 993-1313 (HELLGRRMPD…VRAVGEPDAS (321 aa)) constitute a PKS/mFAS DH domain. Histidine 1025 (proton acceptor; for dehydratase activity) is an active-site residue. Residues 1158-1313 (LQQLDCEKLY…VRAVGEPDAS (156 aa)) form a C-terminal hotdog fold region. Residue aspartate 1217 is the Proton donor; for dehydratase activity of the active site. The methyltransferase (MT) domain stretch occupies residues 1459–1652 (RLYTEDKGMH…FSGVDHIVHD (194 aa)). Residues 2208-2381 (TYLMVGAAGG…AASIIHVGHV (174 aa)) form a ketoreductase (KR) domain region. The region spanning 2500–2580 (EAAAAALKGF…QLSALAAKLA (81 aa)) is the Carrier 1 domain. At serine 2540 the chain carries O-(pantetheine 4'-phosphoryl)serine. The disordered stretch occupies residues 2587 to 2709 (RAQLEEASGN…EISSNGFFTQ (123 aa)). Residues 2605–2619 (NDKETGPSKKGKAQE) are compositionally biased toward basic and acidic residues. Composition is skewed to polar residues over residues 2645 to 2659 (GGSS…SSVS) and 2666 to 2678 (QEST…NNGE). The segment covering 2679–2695 (STPSKSSNCNSDSGSDN) has biased composition (low complexity). The interval 2720–3163 (REAPMSPAQS…TAQSVGDCVV (444 aa)) is condensation (C) domain. Positions 3197–3609 (CQQHSTKSAI…DGTLLCFGRI (413 aa)) are adenylation (A) (KR) domain. A disordered region spans residues 3724–3750 (DEAAAATSPSNDNNNNNTPSGGGGEKM). Residues 3726–3742 (AAAATSPSNDNNNNNTP) show a composition bias toward low complexity. The 86-residue stretch at 3748-3833 (EKMTVRQGEL…GMARCVAEQR (86 aa)) folds into the Carrier 2 domain. Position 3793 is an O-(pantetheine 4'-phosphoryl)serine (serine 3793). Residues 3860-3889 (EKLQHSSASSSSSSSSSSAGSSSTQRPRKT) form a disordered region. Residues 3865–3882 (SSASSSSSSSSSSAGSSS) are compositionally biased toward low complexity. A reductase (RED) domain region spans residues 3896-4141 (LTGATGFLGG…LDFGQVDKVV (246 aa)).

The protein in the C-terminal section; belongs to the NRP synthetase family.

It participates in secondary metabolite biosynthesis. In terms of biological role, hybrid PKS-NRPS synthetase; part of the gene cluster that mediates the biosynthesis of tenellin-type 2-pyridones, iron-chelating compounds involved in iron stress tolerance, competition with the natural competitor fungus Metarhizium robertsii and insect hosts infection. TenS catalyzes the assembly of the polyketide-amino acid backbone. Because tenS lacks a designated enoylreductase (ER) domain, the required activity is provided the enoyl reductase tenC. Upon formation of the polyketide backbone on the thiotemplate, the triketide is transferred to the NRPS module and linked to tyrosine to produce the pyrrolidine-2-dione intermediates, including pretellinin A, 11-hydropretellenin A, 12-hydropretellenin A, 13-hydropretellenin A, 14-hydropretellenin A, 12-oxopretellenin A and prototellinin D. The pathway begins with the assembly of the polyketide-amino acid backbone by the hybrid PKS-NRPS tenS with the help of the enoyl reductase tenC. These enzymes catalyze the synthesis of the pyrrolidine-2-dione intermediates pretellinin A, 11-hydropretellenin A, 12-hydropretellenin A, 13-hydropretellenin A, 14-hydropretellenin A, 12-oxopretellenin A and prototellinin D. The cytochrome P450 monooxygenase tenA then catalyzes an oxidative ring expansion of pretenellin A and 14-hydropretellenin A to form the 2-pyridone core, leading to pretenellin B and pyridovericin, respectively. The cytochrome P450 monooxygenase tenB is then required for the selective N-hydroxylation of the 2-pyridone nitrogen of yield tellinin and 15-hydroxytellenin (15-HT), respectively. The UDP-glucosyltransferase GT1 and the methyltransferase MT1, located outside the tenS gene cluster, contribute to the stepwise glycosylation and methylation of 15-HT to obtain the glycoside pyridovericin-N-O-(4-O-methyl-beta-D-glucopyranoside) (PMGP). Additional related compounds such as 1-O-methyl-15-HT, (8Z)-1-O-methyl-15-HT, and O-methyltenellin A are also produced but the enzymes involved in their biosynthesis have still to be determined. The polypeptide is Tenellin synthetase (Beauveria bassiana (strain ARSEF 2860) (White muscardine disease fungus)).